Reading from the N-terminus, the 239-residue chain is ATP-dependent dethiobiotin synthetase BioD (239 aa).

15–20 (EIGKTF) contacts ATP. Threonine 19 contributes to the Mg(2+) binding site. Lysine 40 is an active-site residue. Residues aspartate 57, 118–121 (EGVG), and 178–179 (NH) contribute to the ATP site. Residues aspartate 57 and glutamate 118 each coordinate Mg(2+).

Belongs to the dethiobiotin synthetase family. As to quaternary structure, homodimer. It depends on Mg(2+) as a cofactor.

It is found in the cytoplasm. The enzyme catalyses (7R,8S)-7,8-diammoniononanoate + CO2 + ATP = (4R,5S)-dethiobiotin + ADP + phosphate + 3 H(+). Its pathway is cofactor biosynthesis; biotin biosynthesis; biotin from 7,8-diaminononanoate: step 1/2. Its function is as follows. Catalyzes a mechanistically unusual reaction, the ATP-dependent insertion of CO2 between the N7 and N8 nitrogen atoms of 7,8-diaminopelargonic acid (DAPA, also called 7,8-diammoniononanoate) to form a ureido ring. The polypeptide is ATP-dependent dethiobiotin synthetase BioD (Burkholderia orbicola (strain MC0-3)).